A 177-amino-acid polypeptide reads, in one-letter code: Putative rubredoxin (177 aa).

The 38-residue stretch at 1–38 (MKICRICGYQIPEGEFNLLEDGWVCPRCGVGKEELQDS) folds into the Rubredoxin-like domain. Fe cation is bound by residues Cys-4, Cys-7, Cys-25, and Cys-28.

This sequence belongs to the rubredoxin family. Fe(3+) is required as a cofactor.

The sequence is that of Putative rubredoxin (rdxA) from Methanothermobacter thermautotrophicus (strain ATCC 29096 / DSM 1053 / JCM 10044 / NBRC 100330 / Delta H) (Methanobacterium thermoautotrophicum).